Here is a 59-residue protein sequence, read N- to C-terminus: Venom protein 27.7 (59 aa).

Residues 1 to 29 form the signal peptide; that stretch reads MTFITLTIGLSLRTIFLIFIFLPPPHLLA.

The protein belongs to the non-disulfide-bridged peptide (NDBP) superfamily. As to expression, expressed by the venom gland.

It localises to the secreted. The protein is Venom protein 27.7 of Lychas mucronatus (Chinese swimming scorpion).